Here is a 314-residue protein sequence, read N- to C-terminus: Three-prime repair exonuclease 1 (314 aa).

Residues Asp18 and Glu20 each coordinate Mg(2+). 20 to 21 (EA) contacts substrate. The residue at position 78 (Ser78) is a Phosphoserine. Tyr129 serves as a coordination point for substrate. Position 167 is a phosphoserine (Ser167). The Proton donor/acceptor role is filled by His195. Asp200 is a binding site for Mg(2+). A substrate-binding site is contributed by Asp200. A necessary for endoplasmic reticulum localization region spans residues 236–314 (TASARTKPRP…YGLSLATPGE (79 aa)). The disordered stretch occupies residues 240 to 278 (RTKPRPSAVTTTAHLATTRNTSPSLGESRGTKDLPPVKD). The interval 243 to 314 (PRPSAVTTTA…YGLSLATPGE (72 aa)) is interaction with UBQLN1. A compositionally biased stretch (low complexity) spans 247–260 (AVTTTAHLATTRNT). Ser261 bears the Phosphoserine mark. The interval 281-314 (ALSREGLLAPLGLLAILTLAVATLYGLSLATPGE) is necessary for cytoplasmic retention.

It belongs to the exonuclease superfamily. TREX family. As to quaternary structure, homodimer. Interacts (via proline-rich region) with TCERG1/CA150 (via the second WW domain). Component of the SET complex, composed of at least ANP32A, APEX1, HMGB2, NME1, SET and TREX1. Within this complex, directly interacts with SET; this interaction does not result in TREX1 inhibition. Also interacts with NME1, but only following translocation to the nucleus. Directly interacts with UBQLN1 (via ubiquitin-like domain); the interaction may control TREX1 subcellular location. Requires Mg(2+) as cofactor. In terms of processing, ubiquitinated, but not targeted to proteasomal degradation. Ubiquitination may be important for interaction with UBQLN1. Detected in thymus, spleen, liver, brain, heart, small intestine and colon.

The protein localises to the nucleus. It is found in the cytoplasm. It localises to the cytosol. The protein resides in the endoplasmic reticulum membrane. The enzyme catalyses Exonucleolytic cleavage in the 3'- to 5'-direction to yield nucleoside 5'-phosphates.. Its function is as follows. Major cellular 3'-to-5' DNA exonuclease which digests single-stranded DNA (ssDNA) and double-stranded DNA (dsDNA) with mismatched 3' termini. Prevents cell-intrinsic initiation of autoimmunity. Acts by metabolizing DNA fragments from endogenous retroelements, including L1, LTR and SINE elements. Plays a key role in degradation of DNA fragments at cytosolic micronuclei arising from genome instability: its association with the endoplasmic reticulum membrane directs TREX1 to ruptured micronuclei, leading to micronuclear DNA degradation. Micronuclear DNA degradation is required to limit CGAS activation and subsequent inflammation. Unless degraded, these DNA fragments accumulate in the cytosol and activate the cGAS-STING innate immune signaling, leading to the production of type I interferon. Prevents chronic ATM-dependent checkpoint activation, by processing ssDNA polynucleotide species arising from the processing of aberrant DNA replication intermediates. Inefficiently degrades oxidized DNA, such as that generated upon antimicrobial reactive oxygen production or upon absorption of UV light. During GZMA-mediated cell death, contributes to DNA damage in concert with NME1. NME1 nicks one strand of DNA and TREX1 removes bases from the free 3' end to enhance DNA damage and prevent DNA end reannealing and rapid repair. The chain is Three-prime repair exonuclease 1 from Homo sapiens (Human).